The sequence spans 250 residues: MKTAAYADYLIQWLENQRTELYGMDGYTLGVSGGIDSAVCAHLAARTGAPVQALILPAEVTSPSDVADAQATLESAGIDGQIISIAPWYDLIMQQLSPVLNSEPERVNVLKGNLMARLRMIALFTTAQSHRSIVLGTDNAAEWLTGYFTKFGDGAADVLPLAGLRKEQVFELGRYLGVPQSVLDKKPSAGLWAGQTDEAEMGVTYAEIDAYLRGETVSPQALQQIRFWHNRSHHKRMLPPKPKSPDEAEC.

30–37 (GVSGGIDS) provides a ligand contact to ATP. Aspartate 36 serves as a coordination point for Mg(2+). A deamido-NAD(+)-binding site is contributed by arginine 117. Position 137 (threonine 137) interacts with ATP. Glutamate 142 contributes to the Mg(2+) binding site. The deamido-NAD(+) site is built by lysine 150 and aspartate 157. Residues lysine 166 and serine 188 each coordinate ATP. 234–235 (HK) contacts deamido-NAD(+).

The protein belongs to the NAD synthetase family. In terms of assembly, homodimer.

It catalyses the reaction deamido-NAD(+) + NH4(+) + ATP = AMP + diphosphate + NAD(+) + H(+). Its pathway is cofactor biosynthesis; NAD(+) biosynthesis; NAD(+) from deamido-NAD(+) (ammonia route): step 1/1. Its function is as follows. Catalyzes the ATP-dependent amidation of deamido-NAD to form NAD. Uses ammonia as a nitrogen source. This chain is NH(3)-dependent NAD(+) synthetase, found in Mannheimia succiniciproducens (strain KCTC 0769BP / MBEL55E).